Reading from the N-terminus, the 114-residue chain is rRNA-processing protein cgrA (114 aa).

The tract at residues 1-96 (MSASESAPSA…YDKMAEKMHR (96 aa)) is disordered. Positions 40–101 (AKRLEARKHQ…EKMHRKRVER (62 aa)) form a coiled coil. Residues 41–93 (KRLEARKHQEAVKEHERELKEEKEAERQAHIQRIKDRRAAKEEKERYDKMAEK) are compositionally biased toward basic and acidic residues.

This sequence belongs to the CGR1 family.

It localises to the nucleus. Its subcellular location is the nucleolus. Its function is as follows. Involved in nucleolar integrity and required for processing of the pre-rRNA for the 60S ribosome subunit. In Aspergillus terreus (strain NIH 2624 / FGSC A1156), this protein is rRNA-processing protein cgrA (cgrA).